The sequence spans 497 residues: UDP-N-acetylmuramoyl-L-alanyl-D-glutamate--2,6-diaminopimelate ligase (497 aa).

S29 serves as a coordination point for UDP-N-acetyl-alpha-D-muramoyl-L-alanyl-D-glutamate. Residue 116–122 participates in ATP binding; the sequence is GTNGKTT. Residues N157, 158 to 159, S185, Q191, and R193 each bind UDP-N-acetyl-alpha-D-muramoyl-L-alanyl-D-glutamate; that span reads TT. At K225 the chain carries N6-carboxylysine. Residues R392, 416 to 419, G467, and E471 contribute to the meso-2,6-diaminopimelate site; that span reads DNPR. The Meso-diaminopimelate recognition motif motif lies at 416–419; that stretch reads DNPR.

This sequence belongs to the MurCDEF family. MurE subfamily. Mg(2+) is required as a cofactor. Carboxylation is probably crucial for Mg(2+) binding and, consequently, for the gamma-phosphate positioning of ATP.

The protein localises to the cytoplasm. The enzyme catalyses UDP-N-acetyl-alpha-D-muramoyl-L-alanyl-D-glutamate + meso-2,6-diaminopimelate + ATP = UDP-N-acetyl-alpha-D-muramoyl-L-alanyl-gamma-D-glutamyl-meso-2,6-diaminopimelate + ADP + phosphate + H(+). It functions in the pathway cell wall biogenesis; peptidoglycan biosynthesis. Functionally, catalyzes the addition of meso-diaminopimelic acid to the nucleotide precursor UDP-N-acetylmuramoyl-L-alanyl-D-glutamate (UMAG) in the biosynthesis of bacterial cell-wall peptidoglycan. The chain is UDP-N-acetylmuramoyl-L-alanyl-D-glutamate--2,6-diaminopimelate ligase from Buchnera aphidicola subsp. Acyrthosiphon pisum (strain APS) (Acyrthosiphon pisum symbiotic bacterium).